Here is a 110-residue protein sequence, read N- to C-terminus: uncharacterized protein (110 aa).

This is an uncharacterized protein from Microplitis demolitor bracovirus (isolate Webb) (MdBV).